The following is a 700-amino-acid chain: Phenoloxidase 8 (700 aa).

Residues Met-1–Arg-51 constitute a propeptide that is removed on maturation. Asn-64 and Asn-198 each carry an N-linked (GlcNAc...) asparagine glycan. Positions 223, 227, and 252 each coordinate Cu cation. N-linked (GlcNAc...) asparagine glycosylation occurs at Asn-295. Catalysis depends on Glu-364, which acts as the Proton acceptor. The Cu cation site is built by His-379, His-383, and His-419. N-linked (GlcNAc...) asparagine glycosylation is found at Asn-445, Asn-507, and Asn-565. 2 cysteine pairs are disulfide-bonded: Cys-592/Cys-636 and Cys-594/Cys-643.

Belongs to the tyrosinase family. Homodimer. Cu(2+) is required as a cofactor. Post-translationally, upon activation, a trypsin type protease cleaves prophenol oxidase to yield the active enzyme.

It localises to the secreted. It carries out the reaction 2 tyramine + O2 = 2 dopamine. The catalysed reaction is 2 dopamine + O2 = 2 dopamine quinone + 2 H2O. This is a copper-containing oxidase that functions in the formation of pigments such as melanins and other polyphenolic compounds. Catalyzes the oxidation of o-diphenols such as dopamine. Also oxidizes monophenols such as tyramine. The protein is Phenoloxidase 8 of Anopheles gambiae (African malaria mosquito).